Consider the following 358-residue polypeptide: Endoplasmic reticulum junction formation protein lunapark-B (358 aa).

Over 1–45 (MGAIISRWKTKLTTVEQLENIDKEIKQLEEFRAKNQRLQKLWVGR) the chain is Cytoplasmic. The stretch at 9-41 (KTKLTTVEQLENIDKEIKQLEEFRAKNQRLQKL) forms a coiled coil. A helical transmembrane segment spans residues 46–66 (LLLYSSALYLLISLFVYLLYL). Over 67 to 69 (PEQ) the chain is Lumenal. A helical transmembrane segment spans residues 70–90 (WLLRLAMALPFFIYPVLVWFI). The Cytoplasmic segment spans residues 91–358 (RRFLIFLFSK…SRGMDKHGRA (268 aa)). Positions 99 to 128 (SKRSERNNDKLEDLKATKKKILEEVMETET) form a coiled coil. The segment at 275–300 (CQQCFSHNGMALKEEFEYLAFRCAYC) adopts a C4-type; plays a role in ER morphology zinc-finger fold. The tract at residues 320–358 (NFEKRLRAESSTPGPAPHSATDTEESAPPSRGMDKHGRA) is disordered.

The protein belongs to the lunapark family. In terms of assembly, homodimer; homodimerization requires the C4-type zinc finger motif and decreases during mitosis in a phosphorylation-dependent manner. In terms of processing, phosphorylated. Phosphorylation occurs during interphase. Phosphorylation also occurs during mitosis; these phosphorylations reduce both its homodimerization and the ER three-way tubular junction formation.

The protein resides in the endoplasmic reticulum membrane. Functionally, endoplasmic reticulum (ER)-shaping membrane protein that plays a role in determining ER morphology. Involved in the stabilization of nascent three-way ER tubular junctions within the ER network. May also play a role as a curvature-stabilizing protein within three-way ER tubular junction network. In Takifugu rubripes (Japanese pufferfish), this protein is Endoplasmic reticulum junction formation protein lunapark-B (lnpkb).